The chain runs to 335 residues: Histidinol-phosphatase (335 aa).

The protein belongs to the PHP hydrolase family. HisK subfamily.

It carries out the reaction L-histidinol phosphate + H2O = L-histidinol + phosphate. It participates in amino-acid biosynthesis; L-histidine biosynthesis; L-histidine from 5-phospho-alpha-D-ribose 1-diphosphate: step 8/9. In Saccharomyces cerevisiae (strain ATCC 204508 / S288c) (Baker's yeast), this protein is Histidinol-phosphatase (HIS2).